Reading from the N-terminus, the 276-residue chain is Ammonia monooxygenase alpha subunit (276 aa).

A run of 5 helical transmembrane segments spans residues 29–49 (VYFP…FMLL), 66–86 (PVVT…YLWV), 96–116 (LCVV…FYWW), 123–143 (FVTP…LYLT), and 150–170 (ALVG…PIFG). Cu(+) is bound by residues aspartate 187, histidine 191, and histidine 204. Residues 219–239 (VIAAFFSAFVSMLMFTVWWYL) traverse the membrane as a helical segment.

In terms of assembly, the soluble ammonia monooxygenase is a nonamer composed of three alpha subunits (AmoA), three beta subunits (AmoB) and three gamma subunits (Cytochrome c1 PetC). Requires Cu(+) as cofactor.

It is found in the cell membrane. It localises to the cytoplasm. It carries out the reaction AH2 + NH4(+) + O2 = hydroxylamine + A + H2O + H(+). In vitro, inhibited by acetylene. In fact, acetylene is oxidized to ketene which binds irreversibly to His-191 of ammonia monooxygenase alpha subunit (AmoA). In terms of biological role, part of the ammonia monooxygenase complex, which catalyzes the oxidation of ammonia to hydroxylamine, the first reaction in the process of ammonia oxidation to nitrite. The protein is Ammonia monooxygenase alpha subunit of Nitrosomonas europaea (strain ATCC 19718 / CIP 103999 / KCTC 2705 / NBRC 14298).